Consider the following 757-residue polypeptide: Polyribonucleotide nucleotidyltransferase (757 aa).

Mg(2+) contacts are provided by Asp-482 and Asp-488. The KH domain occupies 549 to 608; the sequence is PRMLSFYIDKDKISAAIGSKGKNIRSVCERSNAKIEIGDDGKVSVFATSGTEAEIAKSMM. Residues 618-686 enclose the S1 motif domain; that stretch reads GSIVDVKVVR…KGGCPKLSRR (69 aa). The tract at residues 698–757 is disordered; that stretch reads GELYNEERKDGPNDRDNYYNNSFSRKPGGSHHKRPPRPHSGFSNRNRPKFGNNDSSSGFY. Over residues 702–714 the composition is skewed to basic and acidic residues; that stretch reads NEERKDGPNDRDN. A compositionally biased stretch (basic residues) spans 725–734; it reads GGSHHKRPPR.

Belongs to the polyribonucleotide nucleotidyltransferase family. The cofactor is Mg(2+).

It is found in the cytoplasm. The enzyme catalyses RNA(n+1) + phosphate = RNA(n) + a ribonucleoside 5'-diphosphate. In terms of biological role, involved in mRNA degradation. Catalyzes the phosphorolysis of single-stranded polyribonucleotides processively in the 3'- to 5'-direction. The polypeptide is Polyribonucleotide nucleotidyltransferase (Wolbachia pipientis wMel).